The sequence spans 240 residues: Probable Ni/Fe-hydrogenase B-type cytochrome subunit (240 aa).

The next 4 membrane-spanning stretches (helical) occupy residues 31–51, 75–95, 142–163, and 196–213; these read LWHW…YFIG, FAAG…AFVG, LAMF…FALY, and LGMW…YLAV.

The protein belongs to the HupC/HyaC/HydC family.

The protein resides in the cell membrane. Functionally, probable b-type cytochrome. This chain is Probable Ni/Fe-hydrogenase B-type cytochrome subunit (hoxZ), found in Azotobacter vinelandii.